Here is a 366-residue protein sequence, read N- to C-terminus: Heat-inducible transcription repressor HrcA (366 aa).

The span at 298–309 (SSGYGQSSTPSA) shows a compositional bias: polar residues. Residues 298-318 (SSGYGQSSTPSANVEHEEYDT) form a disordered region.

It belongs to the HrcA family.

Functionally, negative regulator of class I heat shock genes (grpE-dnaK-dnaJ and groELS operons). Prevents heat-shock induction of these operons. This Bifidobacterium animalis subsp. lactis (strain AD011) protein is Heat-inducible transcription repressor HrcA.